A 684-amino-acid polypeptide reads, in one-letter code: Protein-glutamine gamma-glutamyltransferase 4 (684 aa).

Catalysis depends on residues Cys-268, His-327, and Asp-350. Residues Asn-390, Asp-392, Glu-442, and Glu-447 each coordinate Ca(2+).

It belongs to the transglutaminase superfamily. Transglutaminase family. In terms of assembly, homodimer. Ca(2+) is required as a cofactor. As to expression, prostate.

The enzyme catalyses L-glutaminyl-[protein] + L-lysyl-[protein] = [protein]-L-lysyl-N(6)-5-L-glutamyl-[protein] + NH4(+). Functionally, associated with the mammalian reproductive process. Catalyzes the cross-linking of proteins and the conjugation of polyamines to specific proteins in the seminal tract. The sequence is that of Protein-glutamine gamma-glutamyltransferase 4 (TGM4) from Homo sapiens (Human).